The primary structure comprises 624 residues: DNA damage response protein Mdb1 (624 aa).

Disordered regions lie at residues 177-237 (ERIP…DDES), 249-386 (GETK…KNKH), and 591-624 (IGKR…EQRT). Basic and acidic residues-rich tracts occupy residues 200–217 (DEKL…HSSD) and 225–235 (EDQKQLNKTDD). Positions 250–263 (ETKSPSSVSQSLSG) are enriched in polar residues. A phosphoserine mark is found at S253 and S283. Residues 294–305 (NISDSSIKNNSI) show a composition bias toward low complexity. Basic and acidic residues-rich tracts occupy residues 306 to 316 (HSDEVNPEVRP) and 325 to 352 (EESK…REAE). Residues 356-386 (ISTNYSFPSSSLEDQPDKNVQSSAVENKNKH) are compositionally biased toward polar residues. Residues 376-468 (QSSAVENKNK…KVLDFRSYKY (93 aa)) enclose the BRCT domain.

In terms of assembly, homodimer. Interacts (via BRCT domain) with hta1 peptide containing the S/T-Q motif in vitro; this interaction requires phosphorylation of the hta1 peptide at the S/T-Q motif.

The protein resides in the nucleus. The protein localises to the chromosome. It is found in the cytoplasm. It localises to the cytoskeleton. Its subcellular location is the spindle. Its function is as follows. Involved in DNA damage response (DDR) mediated through its interaction with phosphorylated H2A proteins hta1 and hta2 which mark the discrete foci of DNA damage. This Schizosaccharomyces pombe (strain 972 / ATCC 24843) (Fission yeast) protein is DNA damage response protein Mdb1.